Consider the following 227-residue polypeptide: Bone marrow proteoglycan (227 aa).

Residues 1–16 (MKFPLLLALLVGGAFA) form the signal peptide. Positions 17 to 110 (LHLSSEASDS…TSLMGDSGFK (94 aa)) are cleaved as a propeptide — acidic. The tract at residues 21 to 105 (SEASDSKSPL…KEEDTTSLMG (85 aa)) is disordered. An O-linked (GalNAc...) serine glycan is attached at Ser24. Positions 34-46 (SLPREAEISRPEV) are enriched in basic and acidic residues. Residues 58–70 (LEEEEEEEEEEGS) show a composition bias toward acidic residues. Ser70 carries O-linked (Xyl...) (chondroitin sulfate) serine glycosylation. Positions 128–227 (LVCRSCYRGT…GKRRPFICAY (100 aa)) constitute a C-type lectin domain. Intrachain disulfides connect Cys130-Cys225 and Cys202-Cys217.

Post-translationally, nitrated.

It is found in the secreted. Cytotoxin and helminthotoxin. MBP also induces non-cytolytic histamine release from basophils. It is involved in antiparasitic defense mechanisms and immune hypersensitivity reactions. This Rattus norvegicus (Rat) protein is Bone marrow proteoglycan (Prg2).